The chain runs to 181 residues: Bifunctional adenosylcobalamin biosynthesis protein CobU (181 aa).

GTP-binding positions include 7–14 (GGARSGKS) and 31–33 (ATS). The active-site GMP-histidine intermediate is the H47. Residues 48–51 (KDGR), E59, and E81 each bind GTP.

This sequence belongs to the CobU/CobP family. Homotrimer.

It carries out the reaction adenosylcob(III)inamide + GTP = adenosylcob(III)inamide phosphate + GDP + H(+). It catalyses the reaction adenosylcob(III)inamide + ATP = adenosylcob(III)inamide phosphate + ADP + H(+). The enzyme catalyses adenosylcob(III)inamide phosphate + GTP + H(+) = adenosylcob(III)inamide-GDP + diphosphate. It functions in the pathway cofactor biosynthesis; adenosylcobalamin biosynthesis; adenosylcobalamin from cob(II)yrinate a,c-diamide: step 5/7. Its pathway is cofactor biosynthesis; adenosylcobalamin biosynthesis; adenosylcobalamin from cob(II)yrinate a,c-diamide: step 6/7. Functionally, catalyzes ATP-dependent phosphorylation of adenosylcobinamide and addition of GMP to adenosylcobinamide phosphate. This is Bifunctional adenosylcobalamin biosynthesis protein CobU (cobU) from Salmonella typhimurium (strain LT2 / SGSC1412 / ATCC 700720).